The primary structure comprises 488 residues: GTPase Der (488 aa).

EngA-type G domains are found at residues 3 to 166 (PVVA…AEAM) and 199 to 372 (IKLA…DSAT). GTP-binding positions include 9-16 (GRPNVGKS), 56-60 (DTGGI), 118-121 (NKID), 205-212 (GKPNVGKS), 252-256 (DTAGV), and 317-320 (NKWD). Positions 373–457 (RRVSTSMLTR…PIQLRFQEGD (85 aa)) constitute a KH-like domain.

It belongs to the TRAFAC class TrmE-Era-EngA-EngB-Septin-like GTPase superfamily. EngA (Der) GTPase family. Associates with the 50S ribosomal subunit.

In terms of biological role, GTPase that plays an essential role in the late steps of ribosome biogenesis. The polypeptide is GTPase Der (Shewanella sp. (strain MR-7)).